We begin with the raw amino-acid sequence, 102 residues long: Small ribosomal subunit protein uS10c (102 aa).

Belongs to the universal ribosomal protein uS10 family. As to quaternary structure, part of the 30S ribosomal subunit.

Its subcellular location is the plastid. The protein resides in the chloroplast. Its function is as follows. Involved in the binding of tRNA to the ribosomes. The protein is Small ribosomal subunit protein uS10c of Guillardia theta (Cryptophyte).